Consider the following 233-residue polypeptide: Adapter protein MecA (233 aa).

Belongs to the MecA family. In terms of assembly, homodimer.

Its function is as follows. Enables the recognition and targeting of unfolded and aggregated proteins to the ClpC protease or to other proteins involved in proteolysis. This is Adapter protein MecA from Lactococcus lactis subsp. lactis (strain IL1403) (Streptococcus lactis).